A 93-amino-acid polypeptide reads, in one-letter code: Small ribosomal subunit protein bS18 (93 aa).

Belongs to the bacterial ribosomal protein bS18 family. Part of the 30S ribosomal subunit. Forms a tight heterodimer with protein bS6.

Functionally, binds as a heterodimer with protein bS6 to the central domain of the 16S rRNA, where it helps stabilize the platform of the 30S subunit. The polypeptide is Small ribosomal subunit protein bS18 (Delftia acidovorans (strain DSM 14801 / SPH-1)).